The following is a 348-amino-acid chain: Mitogen-activated protein kinase 14B (348 aa).

Positions 25–309 (YQNLSPVGSG…ASQALAHPYF (285 aa)) constitute a Protein kinase domain. ATP contacts are provided by residues 31–39 (VGSGAYGSV) and Lys54. Residue Asp169 is the Proton acceptor of the active site. Phosphothreonine; by MAP2K3 is present on Thr181. The TXY signature appears at 181–183 (TGY). The residue at position 183 (Tyr183) is a Phosphotyrosine; by MAP2K3.

The protein belongs to the protein kinase superfamily. CMGC Ser/Thr protein kinase family. MAP kinase subfamily. It depends on Mg(2+) as a cofactor. Dually phosphorylated on Thr-181 and Tyr-183, which activates the enzyme.

The protein resides in the cytoplasm. Its subcellular location is the nucleus. It catalyses the reaction L-seryl-[protein] + ATP = O-phospho-L-seryl-[protein] + ADP + H(+). The enzyme catalyses L-threonyl-[protein] + ATP = O-phospho-L-threonyl-[protein] + ADP + H(+). Its activity is regulated as follows. Activated by threonine and tyrosine phosphorylation by the dual specificity kinase, MKK3. In terms of biological role, serine/threonine kinase which acts as an essential component of the MAP kinase signal transduction pathway. Mapk14b is one of the four p38 MAPKs which play an important role in the cascades of cellular responses evoked by extracellular stimuli such as pro-inflammatory cytokines or physical stress leading to direct activation of transcription factors. Accordingly, p38 MAPKs phosphorylate a broad range of proteins and it has been estimated that they may have approximately 200 to 300 substrates each. Some of the targets are downstream kinases which are activated through phosphorylation and further phosphorylate additional targets. The protein is Mitogen-activated protein kinase 14B (mapk14b) of Danio rerio (Zebrafish).